Reading from the N-terminus, the 224-residue chain is UPF0758 protein Bpro_0948 (224 aa).

Positions 102–224 (LFSTPQAVRD…AVSMAELGLL (123 aa)) constitute an MPN domain. Zn(2+) contacts are provided by H173, H175, and D186. Positions 173-186 (HNHPSGAATPSRAD) match the JAMM motif motif.

The protein belongs to the UPF0758 family.

The chain is UPF0758 protein Bpro_0948 from Polaromonas sp. (strain JS666 / ATCC BAA-500).